Consider the following 128-residue polypeptide: Ribonuclease P protein component (128 aa).

The protein belongs to the RnpA family. Consists of a catalytic RNA component (M1 or rnpB) and a protein subunit.

The catalysed reaction is Endonucleolytic cleavage of RNA, removing 5'-extranucleotides from tRNA precursor.. Functionally, RNaseP catalyzes the removal of the 5'-leader sequence from pre-tRNA to produce the mature 5'-terminus. It can also cleave other RNA substrates such as 4.5S RNA. The protein component plays an auxiliary but essential role in vivo by binding to the 5'-leader sequence and broadening the substrate specificity of the ribozyme. This is Ribonuclease P protein component from Rhizobium meliloti (strain 1021) (Ensifer meliloti).